Consider the following 578-residue polypeptide: GRAM domain-containing protein 4 (578 aa).

Disordered stretches follow at residues 23–58 and 136–159; these read ESPN…AGPG and TEEQ…ERRS. Ser24 and Ser28 each carry phosphoserine. Positions 44 to 53 are enriched in basic and acidic residues; it reads SPRDSEELRD. A coiled-coil region spans residues 83–143; it reads HLEIALLEKH…ARTEEQMAQQ (61 aa). Helical transmembrane passes span 240–260, 334–354, and 356–376; these read VYMN…LAIL, ITQK…FFPY, and LVGL…DFIF. Positions 415–435 are disordered; it reads QTTSSRSYVPSAPAGLGKEED. Residues 445 to 523 enclose the GRAM domain; it reads GNFHEIFNLT…VDITDIQKYK (79 aa).

Interacts with RTN4 (isoform B). As to expression, expressed in lung and in primary lung squamous cell carcinoma (LSCC).

The protein localises to the mitochondrion membrane. It localises to the endoplasmic reticulum membrane. Plays a role as a mediator of E2F1-induced apoptosis in the absence of p53/TP53. Plays a role as a mediator of E2F1-induced apoptosis in the absence of p53/TP53. Inhibits TLR9 response to nucelic acids and regulates TLR9-mediated innate immune response. In Homo sapiens (Human), this protein is GRAM domain-containing protein 4.